Reading from the N-terminus, the 244-residue chain is uncharacterized protein (244 aa).

It belongs to the MtxX family.

This is an uncharacterized protein from Methanocaldococcus jannaschii (strain ATCC 43067 / DSM 2661 / JAL-1 / JCM 10045 / NBRC 100440) (Methanococcus jannaschii).